A 365-amino-acid chain; its full sequence is Aminomethyltransferase (365 aa).

It belongs to the GcvT family. As to quaternary structure, the glycine cleavage system is composed of four proteins: P, T, L and H.

It catalyses the reaction N(6)-[(R)-S(8)-aminomethyldihydrolipoyl]-L-lysyl-[protein] + (6S)-5,6,7,8-tetrahydrofolate = N(6)-[(R)-dihydrolipoyl]-L-lysyl-[protein] + (6R)-5,10-methylene-5,6,7,8-tetrahydrofolate + NH4(+). Its function is as follows. The glycine cleavage system catalyzes the degradation of glycine. The sequence is that of Aminomethyltransferase from Aeromonas hydrophila subsp. hydrophila (strain ATCC 7966 / DSM 30187 / BCRC 13018 / CCUG 14551 / JCM 1027 / KCTC 2358 / NCIMB 9240 / NCTC 8049).